The primary structure comprises 597 residues: Elongation factor 4 (597 aa).

The region spanning 2-184 is the tr-type G domain; the sequence is KHIRNFSIIA…EIVARIPAPV (183 aa). Residues 14–19 and 131–134 each bind GTP; these read DHGKST and NKID.

It belongs to the TRAFAC class translation factor GTPase superfamily. Classic translation factor GTPase family. LepA subfamily.

The protein localises to the cell inner membrane. It carries out the reaction GTP + H2O = GDP + phosphate + H(+). In terms of biological role, required for accurate and efficient protein synthesis under certain stress conditions. May act as a fidelity factor of the translation reaction, by catalyzing a one-codon backward translocation of tRNAs on improperly translocated ribosomes. Back-translocation proceeds from a post-translocation (POST) complex to a pre-translocation (PRE) complex, thus giving elongation factor G a second chance to translocate the tRNAs correctly. Binds to ribosomes in a GTP-dependent manner. This Aeromonas salmonicida (strain A449) protein is Elongation factor 4.